Reading from the N-terminus, the 395-residue chain is MKKEHHSPWPDSLKEFIGRCIQDAEENSQPELEDEVKLLISRQYEMGNIWNVDWSSMNLESLRKLTNAQNTIIEDKKRKVEKPVSGNQFSLLSEEDEVDKKEKRRRRFENGSRSQNNAKSEELKVNPENGAIIGRSTELEKRYLRLTSAPDPDTVRPLPVLKQTLELLKKKWKEEKNYAYICDQFKSLRQDLTVQRIQNEFSVLVYEIHARIALEKGDVGEYNQCQTQLFHLYSFGIPGNTKEFLAYRILYMLFTKNRSEMNSLLANLKEEDKTNAAVTHALEVRSAMATGDYYKFFHLYLVAPNMGGYLMDLFIERERVQAMIMMCKAYRPSLTMEFLANTLAFEEMEDCVNFFRSCNAVYDSKDPNRILMKESTDRFEKCMKKHAVVDIKGQI.

The tract at residues 91–127 (LLSEEDEVDKKEKRRRRFENGSRSQNNAKSEELKVNP) is disordered. One can recognise a PCI domain in the interval 218-384 (DVGEYNQCQT…STDRFEKCMK (167 aa)).

Belongs to the THP3 family.

Its subcellular location is the cytoplasm. The protein localises to the nucleus. Required for transcription elongation. May also be involved in pre-mRNA splicing. The sequence is that of THP3 homolog C2A9.11c from Schizosaccharomyces pombe (strain 972 / ATCC 24843) (Fission yeast).